Here is a 143-residue protein sequence, read N- to C-terminus: Nucleoside diphosphate kinase (143 aa).

ATP-binding residues include lysine 11, phenylalanine 59, arginine 87, threonine 93, arginine 104, and asparagine 114. Histidine 117 functions as the Pros-phosphohistidine intermediate in the catalytic mechanism.

Belongs to the NDK family. Homotetramer. Mg(2+) is required as a cofactor.

It is found in the cytoplasm. The enzyme catalyses a 2'-deoxyribonucleoside 5'-diphosphate + ATP = a 2'-deoxyribonucleoside 5'-triphosphate + ADP. The catalysed reaction is a ribonucleoside 5'-diphosphate + ATP = a ribonucleoside 5'-triphosphate + ADP. Functionally, major role in the synthesis of nucleoside triphosphates other than ATP. The ATP gamma phosphate is transferred to the NDP beta phosphate via a ping-pong mechanism, using a phosphorylated active-site intermediate. This chain is Nucleoside diphosphate kinase, found in Acinetobacter baylyi (strain ATCC 33305 / BD413 / ADP1).